Consider the following 288-residue polypeptide: 2-dehydro-3-deoxyphosphooctonate aldolase (288 aa).

This sequence belongs to the KdsA family.

It is found in the cytoplasm. It carries out the reaction D-arabinose 5-phosphate + phosphoenolpyruvate + H2O = 3-deoxy-alpha-D-manno-2-octulosonate-8-phosphate + phosphate. The protein operates within carbohydrate biosynthesis; 3-deoxy-D-manno-octulosonate biosynthesis; 3-deoxy-D-manno-octulosonate from D-ribulose 5-phosphate: step 2/3. It functions in the pathway bacterial outer membrane biogenesis; lipopolysaccharide biosynthesis. The polypeptide is 2-dehydro-3-deoxyphosphooctonate aldolase (Syntrophobacter fumaroxidans (strain DSM 10017 / MPOB)).